Reading from the N-terminus, the 346-residue chain is NADH-quinone oxidoreductase subunit H (346 aa).

Transmembrane regions (helical) follow at residues 6 to 26 (ILFWLLKSGLFFFILITACAY), 76 to 96 (IMYLIAPAISMTCAIMAWSVV), 128 to 148 (ILFLFAISSLAVYGIIIAGWA), 166 to 186 (ISYELPLSMSVVSIVILTGSL), 198 to 218 (LWNIFKLPGFIAFCLFVVAMF), 260 to 280 (ITMSCVVTLLFFGGYQVPFGI), 289 to 309 (LFGLFFFLGKVLFFTFLFVWV), and 324 to 344 (LGWKKLIPWAVLNILIASLYI).

Belongs to the complex I subunit 1 family. As to quaternary structure, NDH-1 is composed of 14 different subunits. Subunits NuoA, H, J, K, L, M, N constitute the membrane sector of the complex.

The protein resides in the cell inner membrane. The catalysed reaction is a quinone + NADH + 5 H(+)(in) = a quinol + NAD(+) + 4 H(+)(out). In terms of biological role, NDH-1 shuttles electrons from NADH, via FMN and iron-sulfur (Fe-S) centers, to quinones in the respiratory chain. The immediate electron acceptor for the enzyme in this species is believed to be ubiquinone. Couples the redox reaction to proton translocation (for every two electrons transferred, four hydrogen ions are translocated across the cytoplasmic membrane), and thus conserves the redox energy in a proton gradient. This subunit may bind ubiquinone. The sequence is that of NADH-quinone oxidoreductase subunit H from Leptospira borgpetersenii serovar Hardjo-bovis (strain JB197).